The chain runs to 183 residues: Segregation and condensation protein B (183 aa).

It belongs to the ScpB family. In terms of assembly, homodimer. Homodimerization may be required to stabilize the binding of ScpA to the Smc head domains. Component of a cohesin-like complex composed of ScpA, ScpB and the Smc homodimer, in which ScpA and ScpB bind to the head domain of Smc. The presence of the three proteins is required for the association of the complex with DNA.

Its subcellular location is the cytoplasm. Its function is as follows. Participates in chromosomal partition during cell division. May act via the formation of a condensin-like complex containing Smc and ScpA that pull DNA away from mid-cell into both cell halves. The chain is Segregation and condensation protein B from Streptococcus pyogenes serotype M1.